A 277-amino-acid chain; its full sequence is Anamorsin homolog (277 aa).

Positions 1-134 (MALQGNVAIL…PFYPEFSDAV (134 aa)) are N-terminal SAM-like domain. The interval 135–191 (SFTSKKQSFESAAIPLAVKSTTTQPIKKWTVLADDFGDDQDDDIIDEDTLLDDTDEV) is linker. [2Fe-2S] cluster contacts are provided by cysteine 199, cysteine 210, cysteine 213, and cysteine 215. Positions 199-215 (CGDAVGGKKRACKNCTC) are fe-S binding site A. The [4Fe-4S] cluster site is built by cysteine 238, cysteine 241, cysteine 249, and cysteine 252. 2 consecutive short sequence motifs (cx2C motif) follow at residues 238 to 241 (CGNC) and 249 to 252 (CGSC). Residues 238-252 (CGNCFKGDAFRCGSC) form a fe-S binding site B region.

Belongs to the anamorsin family. Monomer. [2Fe-2S] cluster is required as a cofactor. The cofactor is [4Fe-4S] cluster.

It is found in the cytoplasm. The protein localises to the mitochondrion intermembrane space. Functionally, component of the cytosolic iron-sulfur (Fe-S) protein assembly (CIA) machinery. Required for the maturation of extramitochondrial Fe-S proteins. Part of an electron transfer chain functioning in an early step of cytosolic Fe-S biogenesis, facilitating the de novo assembly of a [4Fe-4S] cluster on the cytosolic Fe-S scaffold complex. Electrons are transferred from NADPH via a FAD- and FMN-containing diflavin oxidoreductase. Together with the diflavin oxidoreductase, also required for the assembly of the diferric tyrosyl radical cofactor of ribonucleotide reductase (RNR), probably by providing electrons for reduction during radical cofactor maturation in the catalytic small subunit. The sequence is that of Anamorsin homolog from Phytophthora infestans (strain T30-4) (Potato late blight agent).